The sequence spans 205 residues: Probable thymidylate kinase (205 aa).

10–17 (GIDGSGKS) serves as a coordination point for ATP.

It belongs to the thymidylate kinase family.

The enzyme catalyses dTMP + ATP = dTDP + ADP. This chain is Probable thymidylate kinase, found in Methanosarcina barkeri (strain Fusaro / DSM 804).